Consider the following 152-residue polypeptide: MKKNIQQTVTELVSPVVESLNYELVDIEYVKEGANWYLRVYIDKPGGISIDDCQAVSEQVSDLLDKDDPIDQSYFLEVSSPGLDRPLKTEKDFAKYKGELVEVKVFQPIDGKKIFEGELVGLKDNIIVINQDGHNVQFERDEVAIVKRVIKF.

It belongs to the RimP family.

It is found in the cytoplasm. In terms of biological role, required for maturation of 30S ribosomal subunits. This is Ribosome maturation factor RimP from Ruminiclostridium cellulolyticum (strain ATCC 35319 / DSM 5812 / JCM 6584 / H10) (Clostridium cellulolyticum).